We begin with the raw amino-acid sequence, 1682 residues long: Calmodulin-binding transcription activator 1 (1682 aa).

The CG-1 DNA-binding region spans 63–188 (KCSSLPKERH…YLNVPAIEDC (126 aa)). The Nuclear localization signal signature appears at 112-119 (RKKVKYRK). 2 disordered regions span residues 284 to 375 (RIIS…MVDS) and 599 to 622 (SSFS…FLQD). Positions 302 to 327 (EVQHNDVSEGKHEPSHGRSTSREKRN) are enriched in basic and acidic residues. Polar residues-rich tracts occupy residues 337 to 367 (HQNS…SGLN) and 599 to 618 (SSFS…SPSF). One can recognise an IPT/TIG domain in the interval 877–955 (DYSPEWSYPE…ISNSVVFEYK (79 aa)). A disordered region spans residues 992–1020 (MAEMTGSQQHKQASGGGGSGSGSGSGAGG). Residues 1005 to 1020 (SGGGGSGSGSGSGAGG) show a composition bias toward gly residues. 3 ANK repeats span residues 1066-1095 (RGMT…KHAD), 1111-1141 (FSCT…AISI), and 1145-1174 (LGRL…DEQA). Disordered stretches follow at residues 1217–1249 (ASTN…KKHK) and 1267–1318 (LSLE…SASQ). A compositionally biased stretch (polar residues) spans 1268 to 1291 (SLEQPNIRKQSPRSKQPSPETISP). A compositionally biased stretch (low complexity) spans 1308-1318 (ETAASQASASQ). IQ domains are found at residues 1549 to 1585 (QEVA…AAIL), 1586 to 1608 (IQSK…AAVL), and 1609 to 1631 (IQNF…TAVI).

It belongs to the CAMTA family. May interact with calmodulin.

It localises to the nucleus. Its subcellular location is the cytoplasm. Transcriptional activator. The protein is Calmodulin-binding transcription activator 1 of Mus musculus (Mouse).